The primary structure comprises 139 residues: Transcription antitermination protein NusB (139 aa).

It belongs to the NusB family.

Involved in transcription antitermination. Required for transcription of ribosomal RNA (rRNA) genes. Binds specifically to the boxA antiterminator sequence of the ribosomal RNA (rrn) operons. The chain is Transcription antitermination protein NusB from Cronobacter sakazakii (strain ATCC BAA-894) (Enterobacter sakazakii).